Here is a 489-residue protein sequence, read N- to C-terminus: Cytochrome P450 2C3 (489 aa).

Position 434 (cysteine 434) interacts with heme.

Belongs to the cytochrome P450 family. Requires heme as cofactor.

The protein localises to the endoplasmic reticulum membrane. The protein resides in the microsome membrane. The enzyme catalyses an organic molecule + reduced [NADPH--hemoprotein reductase] + O2 = an alcohol + oxidized [NADPH--hemoprotein reductase] + H2O + H(+). Functionally, cytochromes P450 are a group of heme-thiolate monooxygenases. In liver microsomes, this enzyme is involved in an NADPH-dependent electron transport pathway. It oxidizes a variety of structurally unrelated compounds, including steroids, fatty acids, and xenobiotics. The chain is Cytochrome P450 2C3 (CYP2C3) from Oryctolagus cuniculus (Rabbit).